A 334-amino-acid polypeptide reads, in one-letter code: D-fructose 1,6-bisphosphatase class 2/sedoheptulose 1,7-bisphosphatase (334 aa).

4 residues coordinate Mn(2+): Asp33, Glu57, Asp85, and Glu88. Residues 88 to 90, Tyr119, 164 to 166, and 186 to 188 each bind substrate; these read EGT, RAR, and DGD. Glu213 provides a ligand contact to Mn(2+).

This sequence belongs to the FBPase class 2 family. As to quaternary structure, homotetramer. Mn(2+) is required as a cofactor.

The catalysed reaction is beta-D-fructose 1,6-bisphosphate + H2O = beta-D-fructose 6-phosphate + phosphate. It carries out the reaction D-sedoheptulose 1,7-bisphosphate + H2O = D-sedoheptulose 7-phosphate + phosphate. The protein operates within carbohydrate biosynthesis; Calvin cycle. Catalyzes the hydrolysis of fructose 1,6-bisphosphate (Fru 1,6-P2) and sedoheptulose 1,7-bisphosphate (Sed 1,7-P2) to fructose 6-phosphate and sedoheptulose 7-phosphate, respectively. This chain is D-fructose 1,6-bisphosphatase class 2/sedoheptulose 1,7-bisphosphatase, found in Prochlorococcus marinus (strain MIT 9313).